The chain runs to 612 residues: MPEAPKKESLEVFDLTLDQKNKQKLQLIEELTSNADQVQRQVLEEILTRNADVEYLRRHDLNGRTDRETFKNIMPVITYEDIEPEINRIANGDKSPILSSKPISEFLTSSGTSGGERKLMPTIEEELDRRSLLYSLLMPVMSQFVPGLENGKGMYFLFIKSESKTPGGLPARPVLTSYYKSSHFKERPYDPYTNYTSPNETILCSDSYQSMYSQMLCGLCQHQEVLRVGAVFASGFIRAIKFLEKHWIELVRDIRTGTLSSLITDPSVREAVAKILKPSPKLADFVEFECKKSSWQGIITRLWPNTKYVDVIVTGTMSQYIPTLDYYSNGLPLVCTMYASSECYFGVNLRPLCKPSEVSYTLIPSMAYFEFLPVHRNNGVTNSINLPKALTEKEQQELVDLVDVKLGQEYELVVTTYAGLCRYRVGDLLRVTGFKNKAPQFSFICRKNVVLSIDSDKTDEVELQNAVKNAVTHLVPFDASLSEYTSYADTSSIPGHYVLFWELCLDGNTPIPPSVFEDCCLAVEESFNTVYRQGRVSDKSIGPLEIKIVEPGTFDKLMDYAISLGASINQYKTPRCVKFAPIIELLNSRVVDSYFSPKCPKWVPGHKQWGSN.

It belongs to the IAA-amido conjugating enzyme family.

Functionally, catalyzes the synthesis of indole-3-acetic acid (IAA)-amino acid conjugates, providing a mechanism for the plant to cope with the presence of excess auxin. Strongly reactive with Glu, Gln, Trp, Asp, Ala, Leu, Phe, Gly, Tyr, Met, Ile and Val. Little or no product formation with His, Ser, Thr, Arg, Lys, or Cys. Also active on pyruvic and butyric acid analogs of IAA, PAA and the synthetic auxin naphthaleneacetic acid (NAA). The two chlorinated synthetic auxin herbicides 2,4-D and 3,6-dichloro-o-anisic acid (dicamba) cannot be used as substrates. The sequence is that of Indole-3-acetic acid-amido synthetase GH3.5 (GH3.5) from Arabidopsis thaliana (Mouse-ear cress).